The sequence spans 155 residues: Large ribosomal subunit protein uL13 (155 aa).

Belongs to the universal ribosomal protein uL13 family. In terms of assembly, part of the 50S ribosomal subunit.

In terms of biological role, this protein is one of the early assembly proteins of the 50S ribosomal subunit, although it is not seen to bind rRNA by itself. It is important during the early stages of 50S assembly. The sequence is that of Large ribosomal subunit protein uL13 from Aeropyrum pernix (strain ATCC 700893 / DSM 11879 / JCM 9820 / NBRC 100138 / K1).